Here is a 151-residue protein sequence, read N- to C-terminus: Large ribosomal subunit protein bL9 (151 aa).

Belongs to the bacterial ribosomal protein bL9 family.

Binds to the 23S rRNA. The chain is Large ribosomal subunit protein bL9 from Lactobacillus acidophilus (strain ATCC 700396 / NCK56 / N2 / NCFM).